The sequence spans 294 residues: UPF0761 membrane protein YPN_0254 (294 aa).

7 consecutive transmembrane segments (helical) span residues 44–64 (LLSLVPLITVIFALFAAFPMF), 67–87 (ISIKLKAFIFANFMPATGDII), 108–128 (GLIVTALLLIYSVDSVLNIIW), 136–156 (LVFSFAVYWMVLTLGPILVGA), 185–205 (VFPLLISWVSFWLLYSVVPTV), 212–232 (ALIGALVAALLFELGKKGFAM), and 246–266 (VLAVIPILFLWVYWSWCIVLL).

This sequence belongs to the UPF0761 family.

The protein resides in the cell inner membrane. This Yersinia pestis bv. Antiqua (strain Nepal516) protein is UPF0761 membrane protein YPN_0254.